The chain runs to 142 residues: MFQGASSLSLDAKGRLSVPTRHRDVLVATAAGLLTITRHPHGCLMLFPRPEWEKFRERIAELPMSAQWWKRIFLGNAMDVEIDATGRVLISPELRQAAGIAKDTMLLGMGRHFELWDKASYEAQEAQAMQGAMPDVFKDFSF.

SpoVT-AbrB domains lie at 5-51 (ASSL…PRPE) and 77-120 (AMDV…DKAS).

This sequence belongs to the MraZ family. In terms of assembly, forms oligomers.

Its subcellular location is the cytoplasm. It localises to the nucleoid. The sequence is that of Transcriptional regulator MraZ from Verminephrobacter eiseniae (strain EF01-2).